Here is an 832-residue protein sequence, read N- to C-terminus: MSGRGGCGPCWGLLLALVLALGALPWTQGAEQEHHDEIQGFQIVTFKWHHVQDPYIIALWVLVASLAKIVFHLSHKVTSVVPESALLIVLGLVLGGIVLAADHIASFTLTPTVFFFYLLPPIVLDAGYFMPNRLFFSNLGSILLYAVVGTVWNAATTGLSLYGVFLSGIMGELKIGLLDFLLFGSLIAAVDPVAVLAVFEEVHVNEVLFIIVFGESLLNDAVTVVLYNVFQSFVTLGGDKVTGVDCVKGIVSFFVVSLGGTLVGVVFAFLLSLVTRFTKHVRVIEPGFVFIISYLSYLTSEMLSLSSILAITFCGICCQKYVKANISEQSATTVRYTMKMLASGAETIIFMFLGISAVDPLIWTWNTAFVLLTLLFVSVFRAIGVVLQTWLLNRYRMVQLELIDQVVMSYGGLRGAVAFALVALLDGNKVKEKNLFVSTTIIVVFFTVIFQGLTIKPLVQWLKVKRSEHREPKLNEKLHGRAFDHILSAIEDISGQIGHNYLRDKWANFDRRFLSKLLMRQSAQKSRDRILNVFHELNLKDAISYVTEGERRGSLAFIRSPSTDNMVNVDFSTPRPSTVEASVSYLLRESASAVCLDMQSLEQRRRSVRDAEDVITHHTLQQYLYKPRQEYKHLYSRHVLSPSEDEKQDKEIFHRTMRKRLESFKSAKLGLGQSKKATKHKRERERAQKRRNSSVPNGKLPLDSPAYGLTLKERELELSDPEEAPDYYEAEKMSGGIEFLASVTKDTTSDSPAGIDNPVFSPDEDLAPSLLARVPPWLSPGEAVVPSQRARVQIPYSPGNFRRLAPFRLSNKSVDSFLLAEDGAEHPESTHM.

The signal sequence occupies residues 1-29 (MSGRGGCGPCWGLLLALVLALGALPWTQG). The Extracellular portion of the chain corresponds to 30-50 (AEQEHHDEIQGFQIVTFKWHH). A helical transmembrane segment spans residues 51-73 (VQDPYIIALWVLVASLAKIVFHL). Topologically, residues 74–81 (SHKVTSVV) are cytoplasmic. A helical transmembrane segment spans residues 82-101 (PESALLIVLGLVLGGIVLAA). Residues 102–110 (DHIASFTLT) lie on the Extracellular side of the membrane. Residues 111–128 (PTVFFFYLLPPIVLDAGY) traverse the membrane as a helical segment. Topologically, residues 129-131 (FMP) are cytoplasmic. The chain crosses the membrane as a helical span at residues 132–167 (NRLFFSNLGSILLYAVVGTVWNAATTGLSLYGVFLS). A 1,2-diacyl-sn-glycero-3-phospho-(1D-myo-inositol) contacts are provided by glycine 140 and serine 141. Over 168 to 180 (GIMGELKIGLLDF) the chain is Extracellular. A helical membrane pass occupies residues 181-202 (LLFGSLIAAVDPVAVLAVFEEV). The Cytoplasmic segment spans residues 203 to 204 (HV). The chain crosses the membrane as a helical span at residues 205–236 (NEVLFIIVFGESLLNDAVTVVLYNVFQSFVTL). At 237 to 243 (GGDKVTG) the chain is on the extracellular side. The helical transmembrane segment at 244–278 (VDCVKGIVSFFVVSLGGTLVGVVFAFLLSLVTRFT) threads the bilayer. At 279 to 280 (KH) the chain is on the cytoplasmic side. Residues 281-303 (VRVIEPGFVFIISYLSYLTSEML) form a helical membrane-spanning segment. Residues 304 to 305 (SL) lie on the Extracellular side of the membrane. Residues 306-322 (SSILAITFCGICCQKYV) form a helical membrane-spanning segment. At 323–329 (KANISEQ) the chain is on the cytoplasmic side. The helical transmembrane segment at 330–358 (SATTVRYTMKMLASGAETIIFMFLGISAV) threads the bilayer. Topologically, residues 359 to 366 (DPLIWTWN) are extracellular. A helical transmembrane segment spans residues 367–388 (TAFVLLTLLFVSVFRAIGVVLQ). The Cytoplasmic portion of the chain corresponds to 389 to 401 (TWLLNRYRMVQLE). Methionine 397 is a binding site for a 1,2-diacyl-sn-glycero-3-phospho-(1D-myo-inositol). The helical transmembrane segment at 402-425 (LIDQVVMSYGGLRGAVAFALVALL) threads the bilayer. Over 426-432 (DGNKVKE) the chain is Extracellular. Residues 433-466 (KNLFVSTTIIVVFFTVIFQGLTIKPLVQWLKVKR) traverse the membrane as a helical segment. The Cytoplasmic portion of the chain corresponds to 467-832 (SEHREPKLNE…GAEHPESTHM (366 aa)). A 1,2-diacyl-sn-glycero-3-phospho-(1D-myo-inositol) contacts are provided by glutamine 496, isoleucine 497, and histidine 499. Residues serine 554 and serine 562 each carry the phosphoserine modification. The interval 575–589 (RPSTVEASVSYLLRE) is interaction with EZR. The interval 590 to 667 (SASAVCLDMQ…RKRLESFKSA (78 aa)) is interaction with NHERF4. An interaction with AHCYL1 region spans residues 591 to 696 (ASAVCLDMQS…AQKRRNSSVP (106 aa)). A phosphoserine mark is found at serine 592 and serine 607. The residue at position 663 (serine 663) is a Phosphoserine; by SGK1. The segment at 664-706 (FKSAKLGLGQSKKATKHKRERERAQKRRNSSVPNGKLPLDSPA) is disordered. Basic residues predominate over residues 676–692 (KATKHKRERERAQKRRN). Phosphoserine is present on residues serine 719, serine 813, and serine 816.

It belongs to the monovalent cation:proton antiporter 1 (CPA1) transporter (TC 2.A.36) family. Homodimer. Found in the forms of complex and dynamic macromolecular complexes. Interacts with CHP1; this interaction increases trafficking and activity at the plasma membrane of SLC9A3. Interacts with CHP2 and SHANK2. Interacts with NHERF4 and interaction decreases in response to elevated calcium ion levels. Binds NHERF1 and NHERF2. Interacts with PDZK1 (via C-terminal PDZ domain). Interacts with AHCYL1; interaction is required for SLC9A3 activity. Interacts with EZR; interaction targets SLC9A3 to the apical membrane. Interacts with SNX27 (via PDZ domains); directs SLC9A3 membrane insertion from early endosomes to the plasma membrane. Phosphorylated by PKA, which inhibits activity. Phosphorylation at Ser-663 by SGK1 is associated with increased abundance at the cell membrane and activity. Phosphorylation at Ser-719 by CSNK2A1 regulates SLC9A3 activity through the formation of multiple signaling complexes. In terms of tissue distribution, intestinal and kidney specific. Most abundant in kidney cortex, followed equally by ileum and ascending colon, then kidney medulla and jejunum. Is absent from duodenum and descending colon.

Its subcellular location is the apical cell membrane. It localises to the cell membrane. It is found in the recycling endosome membrane. The protein localises to the early endosome membrane. The enzyme catalyses Na(+)(in) + H(+)(out) = Na(+)(out) + H(+)(in). Seems to switch between active and inactive modes in response to various stimuli. Activated directly or indirectly by membrane phosphatidylinositol (PIs). Regulated by a variety of auxiliary proteins, which facilitate the maturation, cell surface expression and function of the transporter. Inhibited specifically by the drug tenapanor. Functionally, plasma membrane Na(+)/H(+) antiporter. Exchanges intracellular H(+) ions for extracellular Na(+) in 1:1 stoichiometry, playing a key role in salt and fluid absorption and pH homeostasis. Major apical Na(+)/H(+) exchanger in kidney and intestine playing an important role in renal and intestine Na(+) absorption and blood pressure regulation. The sequence is that of Sodium/hydrogen exchanger 3 (SLC9A3) from Oryctolagus cuniculus (Rabbit).